A 215-amino-acid chain; its full sequence is Octanoyltransferase (215 aa).

A BPL/LPL catalytic domain is found at 42 to 215 (QNTPDEIWLL…AEKLKARLKQ (174 aa)). Substrate is bound by residues 81–88 (RGGQITYH), 148–150 (ALG), and 161–163 (GLA). Cys-179 functions as the Acyl-thioester intermediate in the catalytic mechanism.

The protein belongs to the LipB family.

It is found in the cytoplasm. It carries out the reaction octanoyl-[ACP] + L-lysyl-[protein] = N(6)-octanoyl-L-lysyl-[protein] + holo-[ACP] + H(+). Its pathway is protein modification; protein lipoylation via endogenous pathway; protein N(6)-(lipoyl)lysine from octanoyl-[acyl-carrier-protein]: step 1/2. In terms of biological role, catalyzes the transfer of endogenously produced octanoic acid from octanoyl-acyl-carrier-protein onto the lipoyl domains of lipoate-dependent enzymes. Lipoyl-ACP can also act as a substrate although octanoyl-ACP is likely to be the physiological substrate. The protein is Octanoyltransferase of Nitrosospira multiformis (strain ATCC 25196 / NCIMB 11849 / C 71).